Reading from the N-terminus, the 881-residue chain is Sodium/sulfate cotransporter 1 (881 aa).

6 helical membrane-spanning segments follow: residues Gly-8–Gly-28, Ile-31–Ala-51, Gly-61–Leu-81, Met-107–Ile-127, Leu-140–Ser-160, and Ile-186–Leu-206. RCK C-terminal domains are found at residues Leu-212–Leu-296, Val-318–Asn-402, Leu-407–Leu-492, and Glu-498–Phe-584. The next 6 membrane-spanning stretches (helical) occupy residues Met-601–Lys-621, Tyr-625–Met-645, Val-658–Ala-678, Ala-684–Ile-704, Phe-775–Val-795, and Val-803–Leu-823. The tract at residues Ser-854–Ala-881 is disordered.

The protein belongs to the divalent anion:Na+ symporter (DASS) superfamily. Na+/sulfate symporter (TC 2.A.47.4) family.

Its subcellular location is the cell membrane. Its function is as follows. Na(+)/sulfate cotransporter with a probable high-affinity for sulfate and a proteasome dependent turnover. The polypeptide is Sodium/sulfate cotransporter 1 (SLT1) (Chlamydomonas reinhardtii (Chlamydomonas smithii)).